Consider the following 227-residue polypeptide: Nodulation protein W (227 aa).

Residues 21-135 (IVFVVEDDIS…ELLDAVVAAT (115 aa)) enclose the Response regulatory domain. Position 70 is a 4-aspartylphosphate (Asp70). An HTH luxR-type domain is found at 151-216 (LKSLFETLSP…DLIRMSETLG (66 aa)). Positions 175–194 (NKQVAAELGLAEITVKIYRG) form a DNA-binding region, H-T-H motif.

In terms of processing, phosphorylated by NodV.

Its subcellular location is the cytoplasm. Member of the two-component regulatory system NodV/NodW probably involved in the regulation of the transcription of genes involved in the nodulation process. The protein is Nodulation protein W (nodW) of Bradyrhizobium diazoefficiens (strain JCM 10833 / BCRC 13528 / IAM 13628 / NBRC 14792 / USDA 110).